The following is a 375-amino-acid chain: Aminomethyltransferase (375 aa).

Belongs to the GcvT family. The glycine cleavage system is composed of four proteins: P, T, L and H.

It catalyses the reaction N(6)-[(R)-S(8)-aminomethyldihydrolipoyl]-L-lysyl-[protein] + (6S)-5,6,7,8-tetrahydrofolate = N(6)-[(R)-dihydrolipoyl]-L-lysyl-[protein] + (6R)-5,10-methylene-5,6,7,8-tetrahydrofolate + NH4(+). Functionally, the glycine cleavage system catalyzes the degradation of glycine. This chain is Aminomethyltransferase, found in Ralstonia nicotianae (strain ATCC BAA-1114 / GMI1000) (Ralstonia solanacearum).